The following is a 33-amino-acid chain: Thrombin-like enzyme RP34 (33 aa).

One can recognise a Peptidase S1 domain in the interval 1 to 33 (VIGGDEXDINEHRSLALMYXSWSHRFIXXGXLI).

It belongs to the peptidase S1 family. Snake venom subfamily. In terms of assembly, homodimer. In terms of tissue distribution, expressed by the venom gland.

The protein resides in the secreted. The enzyme catalyses Selective cleavage of Arg-|-Xaa bond in fibrinogen, to form fibrin, and release fibrinopeptide A. The specificity of further degradation of fibrinogen varies with species origin of the enzyme.. Thrombin-like snake venom serine protease that displays clotting activity on fibrinogen. Shows both arginine-ester hydrolase and amidase activities on synthetic substrates. Also shows proteolytic activity toward casein. The sequence is that of Thrombin-like enzyme RP34 from Cerastes cerastes (Horned desert viper).